Consider the following 207-residue polypeptide: Holliday junction branch migration complex subunit RuvA (207 aa).

Residues 1 to 63 (MISSLRGTVL…EDSLQLFGFS (63 aa)) form a domain I region. The segment at 64–142 (GLEQLQVFEL…ACRRPSAPSA (79 aa)) is domain II. Residues 142-146 (ARRPS) form a flexible linker region. A domain III region spans residues 147–207 (APSSVSDSVL…RLGPANQAAR (61 aa)).

The protein belongs to the RuvA family. As to quaternary structure, homotetramer. Forms an RuvA(8)-RuvB(12)-Holliday junction (HJ) complex. HJ DNA is sandwiched between 2 RuvA tetramers; dsDNA enters through RuvA and exits via RuvB. An RuvB hexamer assembles on each DNA strand where it exits the tetramer. Each RuvB hexamer is contacted by two RuvA subunits (via domain III) on 2 adjacent RuvB subunits; this complex drives branch migration. In the full resolvosome a probable DNA-RuvA(4)-RuvB(12)-RuvC(2) complex forms which resolves the HJ.

Its subcellular location is the cytoplasm. In terms of biological role, the RuvA-RuvB-RuvC complex processes Holliday junction (HJ) DNA during genetic recombination and DNA repair, while the RuvA-RuvB complex plays an important role in the rescue of blocked DNA replication forks via replication fork reversal (RFR). RuvA specifically binds to HJ cruciform DNA, conferring on it an open structure. The RuvB hexamer acts as an ATP-dependent pump, pulling dsDNA into and through the RuvAB complex. HJ branch migration allows RuvC to scan DNA until it finds its consensus sequence, where it cleaves and resolves the cruciform DNA. This Leifsonia xyli subsp. xyli (strain CTCB07) protein is Holliday junction branch migration complex subunit RuvA.